Reading from the N-terminus, the 657-residue chain is MSKYLATSVRLCLMVCIVGWLLMPSYKELDGWCSSLSSLERDKSNWLLTGLSTWFCIVPSGTDQSSLVSYFSPLEKLSKFVQDLDLDFVKLWWLETITLINTLNTTEKLLSGVTFSVVLWYPRILVTVLMLVWKLWFPVRFLVVASSLLCLRILVWPFEVIADVILETCAWFTRKYHKLMDVIEDLMMIPQRVMEWCSGNTAKMVVPTVASCVSESIESKLDRILMALGRKGTVLEAAQPGSDFVECEQWPNGLVAIRRHDGRIVGMGFLVVLNGKWRLVTAAHVARECKRGIMLSAGIDSKTVTFQDLDVVLQTQVDACIMNVPAGTAASLGVRKVVINRTPSESKVVRTYGYNSGKFCMSEGLVGTTSANMGFRHGCSTLRGWSGTPIYRDNKVVGIHSRCNGIYENFGLSLDLLVGRLESEETDRYARTMEEFNTEDRPVTPPMEFSWEFEEKFERVRSTRKSFARIESEVATFTATKLSGFDWTDDAPMDFDELPVFESTMVSVFQERPLGGLPISNGNKAEEKKITSEALEPSKSSTPEAAKHTRRRRRNKKKSKNSETGHGPEEQSQQQSRPSSPIPDDSAPVSSPPVSPPSTGSVPKSWTQAYTQKLVLLLGSMDGQSKEKVDLAILEAKSFASALFPPSKPKSSEESEK.

The next 3 helical transmembrane spans lie at 4–24 (YLAT…LLMP), 46–62 (WLLT…PSGT), and 109–131 (LLSG…VLML). In terms of domain architecture, Peptidase S39 spans 239–434 (QPGSDFVECE…ETDRYARTME (196 aa)). Residues H284, D318, and S386 each act as for protease activity in the active site. The disordered stretch occupies residues 513 to 605 (PLGGLPISNG…PPSTGSVPKS (93 aa)). The segment covering 548 to 559 (HTRRRRRNKKKS) has biased composition (basic residues). Basic and acidic residues predominate over residues 560–569 (KNSETGHGPE). The span at 571-589 (QSQQQSRPSSPIPDDSAPV) shows a compositional bias: low complexity.

This sequence belongs to the peptidase S39B family.

Its subcellular location is the host membrane. Functionally, putative serine protease. This chain is Putative serine protease, found in Mushroom bacilliform virus (isolate Australia/AUS LF-1) (MBV).